Consider the following 123-residue polypeptide: Small ribosomal subunit protein uS12 (123 aa).

D89 bears the 3-methylthioaspartic acid mark.

It belongs to the universal ribosomal protein uS12 family. Part of the 30S ribosomal subunit. Contacts proteins S8 and S17. May interact with IF1 in the 30S initiation complex.

Its function is as follows. With S4 and S5 plays an important role in translational accuracy. Functionally, interacts with and stabilizes bases of the 16S rRNA that are involved in tRNA selection in the A site and with the mRNA backbone. Located at the interface of the 30S and 50S subunits, it traverses the body of the 30S subunit contacting proteins on the other side and probably holding the rRNA structure together. The combined cluster of proteins S8, S12 and S17 appears to hold together the shoulder and platform of the 30S subunit. The polypeptide is Small ribosomal subunit protein uS12 (Pelagibacter ubique (strain HTCC1062)).